The primary structure comprises 275 residues: Galaxin-2 (275 aa).

The signal sequence occupies residues 1 to 20 (MTRFTSIGLCAVLLFNVCSC).

As to expression, component of the acid-insoluble and acid-soluble organic matrix of the aragonitic skeleton (at protein level).

It localises to the secreted. In Acropora millepora (Staghorn coral), this protein is Galaxin-2.